A 550-amino-acid chain; its full sequence is Cyclopentanone 1,2-monooxygenase (550 aa).

FAD contacts are provided by residues 31–32, D51, W60, D71, Y77, and V123; that span reads FT.

This sequence belongs to the FAD-binding monooxygenase family. Homotetramer. Requires FAD as cofactor.

It catalyses the reaction cyclopentanone + NADPH + O2 + H(+) = 5-valerolactone + NADP(+) + H2O. It functions in the pathway alcohol metabolism; cyclopentanol degradation; 5-valerolactone from cyclopentanol: step 2/2. Functionally, catalyzes a Baeyer-Villiger oxidation reaction, i.e. the insertion of an oxygen atom into a carbon-carbon bond adjacent to a carbonyl, which converts ketones to esters or lactones using NADPH as an electron donor. Converts cyclopentanone to 5-valerolactone, a step in the degradation pathway of cyclopentanol. Besides cycloalkanones, can also act on methylated and other alkylated cycloalkanones, and on methylated cycloalkenones, with high enantioselectivity in some cases. Cannot use NADH instead of NADPH. This Comamonas sp. (strain NCIMB 9872) protein is Cyclopentanone 1,2-monooxygenase (cpnB).